Consider the following 736-residue polypeptide: Zinc finger CCCH domain-containing protein 14 (736 aa).

At Met1 the chain carries N-acetylmethionine. The span at 77–103 (TTEPSSLKSPDTSIFDSNVPSNKSSFS) shows a compositional bias: polar residues. A disordered region spans residues 77–153 (TTEPSSLKSP…RHSYDDGAST (77 aa)). Phosphoserine is present on Ser85. Glycyl lysine isopeptide (Lys-Gly) (interchain with G-Cter in SUMO2) cross-links involve residues Lys99, Lys139, Lys175, and Lys198. Residues 123–148 (RPEKRDSRVSTSSQEHKSTNVRHSYD) show a composition bias toward basic and acidic residues. Ser240 carries the phosphoserine modification. Residues Lys245, Lys283, and Lys295 each participate in a glycyl lysine isopeptide (Lys-Gly) (interchain with G-Cter in SUMO2) cross-link. Positions 308–350 (FSHDGEEEEEDEDYGTRVGSLSSSVSVPAKPERRPSLPPSKQA) are disordered. Phosphoserine occurs at positions 309, 327, and 343. Lys357 carries the N6-acetyllysine; alternate modification. Lys357 participates in a covalent cross-link: Glycyl lysine isopeptide (Lys-Gly) (interchain with G-Cter in SUMO2); alternate. The span at 367–380 (TKTTNYPAVPQKQT) shows a compositional bias: polar residues. The segment at 367–386 (TKTTNYPAVPQKQTLPVAPR) is disordered. Residue Lys378 forms a Glycyl lysine isopeptide (Lys-Gly) (interchain with G-Cter in SUMO2) linkage. A phosphoserine mark is found at Ser390 and Ser409. Residues 400 to 420 (QGQNRAPRISPPVKEEEAKGD) are disordered. Glycyl lysine isopeptide (Lys-Gly) (interchain with G-Cter in SUMO2) cross-links involve residues Lys413 and Lys489. Residues Ser498, Ser515, Ser527, and Ser620 each carry the phosphoserine modification. C3H1-type zinc fingers lie at residues 595–620 (EKLLERCKYWPACKNGDECVYHHPIS), 621–640 (PCKAFPNCKFAEKCLFVHPN), 641–656 (CKYDAKCTKADCPFTH), 682–699 (CRYFPACKKMECPFYHPK), and 701–719 (CRFNTQCTRPDCTFYHPTI).

Belongs to the ZC3H14 family. In terms of assembly, homodimer; facilitating circular RNAs (circRNAs) formation. Associates with the spliceosome. Interacts with HOOK2. Interacts with ZFC3H1 in a RNase-sensitive manner.

Its subcellular location is the nucleus speckle. Its function is as follows. RNA-binding protein involved in the biogenesis of circular RNAs (circRNAs), which are produced by back-splicing circularization of pre-mRNAs. Acts by binding to both exon-intron boundary and 3'-UTR of pre-mRNAs to promote circRNA biogenesis through dimerization and the association with the spliceosome. Required for spermatogenesis via involvement in circRNA biogenesis. Regulates the pre-mRNA processing of ATP5MC1; preventing its degradation. Also binds the poly(A) tail of mRNAs; controlling poly(A) length in neuronal cells. This Rattus norvegicus (Rat) protein is Zinc finger CCCH domain-containing protein 14.